The primary structure comprises 201 residues: LexA repressor 1 (201 aa).

Positions 27–47 (LAEIAQAFGFASRNAAQKHVQ) form a DNA-binding region, H-T-H motif. Active-site for autocatalytic cleavage activity residues include S122 and K159.

This sequence belongs to the peptidase S24 family. In terms of assembly, homodimer.

It catalyses the reaction Hydrolysis of Ala-|-Gly bond in repressor LexA.. Its function is as follows. Represses a number of genes involved in the response to DNA damage (SOS response), including recA and lexA. In the presence of single-stranded DNA, RecA interacts with LexA causing an autocatalytic cleavage which disrupts the DNA-binding part of LexA, leading to derepression of the SOS regulon and eventually DNA repair. This Xanthomonas axonopodis pv. citri (strain 306) protein is LexA repressor 1.